A 207-amino-acid polypeptide reads, in one-letter code: uncharacterized protein (207 aa).

Residues Arg80, Glu88, and Arg148 contribute to the active site.

This sequence belongs to the thermonuclease family.

This is an uncharacterized protein from Methanocaldococcus jannaschii (strain ATCC 43067 / DSM 2661 / JAL-1 / JCM 10045 / NBRC 100440) (Methanococcus jannaschii).